A 209-amino-acid polypeptide reads, in one-letter code: Guanylate kinase (209 aa).

Residues 5 to 184 (GLLIVFSGPS…AAERVKRVIE (180 aa)) enclose the Guanylate kinase-like domain. 12-19 (GPSGVGKG) contacts ATP.

The protein belongs to the guanylate kinase family.

It localises to the cytoplasm. The catalysed reaction is GMP + ATP = GDP + ADP. Its function is as follows. Essential for recycling GMP and indirectly, cGMP. This chain is Guanylate kinase, found in Streptococcus agalactiae serotype Ia (strain ATCC 27591 / A909 / CDC SS700).